The chain runs to 133 residues: Ribonuclease P protein component (133 aa).

The disordered stretch occupies residues 114-133; the sequence is RSRPTPEEKSEPAGVDSTDA.

This sequence belongs to the RnpA family. In terms of assembly, consists of a catalytic RNA component (M1 or rnpB) and a protein subunit.

It carries out the reaction Endonucleolytic cleavage of RNA, removing 5'-extranucleotides from tRNA precursor.. RNaseP catalyzes the removal of the 5'-leader sequence from pre-tRNA to produce the mature 5'-terminus. It can also cleave other RNA substrates such as 4.5S RNA. The protein component plays an auxiliary but essential role in vivo by binding to the 5'-leader sequence and broadening the substrate specificity of the ribozyme. The protein is Ribonuclease P protein component of Pseudomonas syringae pv. tomato (strain ATCC BAA-871 / DC3000).